A 283-amino-acid polypeptide reads, in one-letter code: Orotidine 5'-phosphate decarboxylase (283 aa).

Lysine 97 serves as the catalytic Proton donor.

It belongs to the OMP decarboxylase family. Type 2 subfamily.

The catalysed reaction is orotidine 5'-phosphate + H(+) = UMP + CO2. It functions in the pathway pyrimidine metabolism; UMP biosynthesis via de novo pathway; UMP from orotate: step 2/2. This Clostridium botulinum (strain Okra / Type B1) protein is Orotidine 5'-phosphate decarboxylase.